The sequence spans 116 residues: Small ribosomal subunit protein eS24 (116 aa).

The segment at 81 to 116 is disordered; that stretch reads IEPEHMVERHKKVLEELESESEESEESESEESEEEE. Acidic residues predominate over residues 96–116; the sequence is ELESESEESEESESEESEEEE.

The protein belongs to the eukaryotic ribosomal protein eS24 family.

The polypeptide is Small ribosomal subunit protein eS24 (Methanopyrus kandleri (strain AV19 / DSM 6324 / JCM 9639 / NBRC 100938)).